A 1097-amino-acid polypeptide reads, in one-letter code: FHIP family protein GK23746 (1097 aa).

The span at 1–21 (MSWLRSSPLRQSLTRTTSSGN) shows a compositional bias: polar residues. The tract at residues 1–25 (MSWLRSSPLRQSLTRTTSSGNGIRP) is disordered. Residue Ser491 is modified to Phosphoserine. Disordered stretches follow at residues 639 to 684 (DVSA…SGRR), 820 to 856 (NENS…RSAY), and 932 to 1042 (NNQQ…SEPV). Low complexity predominate over residues 641 to 654 (SASSGNGTGSVVVG). The residue at position 823 (Ser823) is a Phosphoserine. Low complexity-rich tracts occupy residues 824–852 (PLHQ…GAQQ) and 932–948 (NNQQ…SSSS). Positions 949-962 (AVTTCETSLSTQPH) are enriched in polar residues. The segment covering 973 to 985 (TTSSTISTSSGTT) has biased composition (low complexity). Positions 986–995 (AGSGGGGGSG) are enriched in gly residues. Composition is skewed to low complexity over residues 996-1006 (SNSSFSIGGST) and 1013-1022 (SNNTTNSSST).

The protein belongs to the FHIP family.

In Drosophila willistoni (Fruit fly), this protein is FHIP family protein GK23746.